The primary structure comprises 425 residues: MNELTRTFFNSSVHDTDPLIAQALDDERARQKNQIELIASENIVSQAVLDALGHEMTNKTLEGYPGNRFHGGGQFVDVVEQAAIDRAKQLFNCGYANVQPHSGTQANLAVFFLLVKPGDRILSLDLAAGGHLSHGMKGNLSGRWFEAHNYNVDPQNEVINYDEMERIAEEVKPKLLITGGSAYPRELDFARMAQIAKKVGAFFMVDMAHIAGLVAGGAHPSPFPHADIVTCTTTKTLRGPRGGLILTNNEEWYKKLQTAVFPGVQGSLHSNVLAAKAICLGEALRPEFRDYVAQVVKNAKVLAETLTSRGIRIVSGGTDTHIVLLDLSSKGLNGKQAEDALARANITSNKNPIPNDSPRPAEWVGMRLGVSAATTRGMKEDEFRKLGNVVADLLEAESAGNGPEAAEKAKVTVRELTEAFPVYAH.

Residues leucine 126 and 130-132 (GHL) each bind (6S)-5,6,7,8-tetrahydrofolate. Lysine 235 is modified (N6-(pyridoxal phosphate)lysine). Glutamate 251 serves as a coordination point for (6S)-5,6,7,8-tetrahydrofolate.

Belongs to the SHMT family. In terms of assembly, homodimer. Requires pyridoxal 5'-phosphate as cofactor.

Its subcellular location is the cytoplasm. It carries out the reaction (6R)-5,10-methylene-5,6,7,8-tetrahydrofolate + D-alanine + H2O = 2-methylserine + (6S)-5,6,7,8-tetrahydrofolate. The protein operates within one-carbon metabolism; tetrahydrofolate interconversion. Inhibited by hydroxylamine and sodium borohydride. Catalyzes the reversible interconversion of alpha-methyl-L-serine to D-alanine with tetrahydrofolate (THF) serving as the one-carbon carrier. Cannot use alpha-methyl-D-serine, L-serine, D-serine or L-alanine. The protein is 2-methylserine hydroxymethyltransferase of Paracoccus sp.